A 401-amino-acid chain; its full sequence is MTRTLHLAEQLIARPSITPDDAGCLDLLAARLAPLGFVCERMDSGPARQRVSNLWAKRPVAQVPDAHDASKTAVKTIVFAGHTDVVPTGPLEQWSSNPFLPTRRDGRLYGRGASDMKTSIAAFIVALEEFLAATPEPRIALALLLTSDEEGPSVDGTRVVVEQLKARGDSIDYCIVGEPTAVEKTGDMVKNGRRGTLSGRLLVRGIQGHIAYPQLARNPIHQALPALAELAATEWDQGNEFFPPTSWQISNLHAGTGATNVIPGEMVLDFNFRFSTQSCAEGLQRHVQQLLERHGLSYELHWTLGGQPFLTTPGELLQAVEQAISAETGLSAALSTTGGTSDGRFIAHICPQVIELGPPNASVHKIDEHVLLTDIEALKNIYRRTLENLQAQALAAATMPA.

H82 is a Zn(2+) binding site. D84 is an active-site residue. Residue D115 participates in Zn(2+) binding. Catalysis depends on E149, which acts as the Proton acceptor. E150, E178, and H364 together coordinate Zn(2+).

This sequence belongs to the peptidase M20A family. DapE subfamily. In terms of assembly, homodimer. Requires Zn(2+) as cofactor. The cofactor is Co(2+).

It carries out the reaction N-succinyl-(2S,6S)-2,6-diaminopimelate + H2O = (2S,6S)-2,6-diaminopimelate + succinate. Its pathway is amino-acid biosynthesis; L-lysine biosynthesis via DAP pathway; LL-2,6-diaminopimelate from (S)-tetrahydrodipicolinate (succinylase route): step 3/3. Its function is as follows. Catalyzes the hydrolysis of N-succinyl-L,L-diaminopimelic acid (SDAP), forming succinate and LL-2,6-diaminopimelate (DAP), an intermediate involved in the bacterial biosynthesis of lysine and meso-diaminopimelic acid, an essential component of bacterial cell walls. The sequence is that of Succinyl-diaminopimelate desuccinylase from Verminephrobacter eiseniae (strain EF01-2).